Here is a 438-residue protein sequence, read N- to C-terminus: MLKDFIKNTNILNILLAYSGGIDSTFLLYQLLKLKKNNLNFTFRAIHINHQLHPDSEKWSDHCKKICINHNIPIIIKKITINSNKNRIEEIARKKRYQAIYKIIKPKEVLATGHNLNDQCETMLLALKRGSGITGLSSMSYKLNTIYKIKIVRPLLKISREDIKTWIYKHKIHWIEDTSNNDTKHDRNFLRLNIIPKLKNRWPYFEKNCSRSIEILNIEKKILKQEIKKKLNKYLVLNSILNISNFRYIDKNICSIILRHWIKINQNTMPTFKIVKEIYNKVIFSKIDSQPKIIIKNYQIRRYNNHLYWTKKIPRIENIILIWNNTQKKLTLPFQLGNIVQNDFGTTLPHPNNNETINIRFYTSHKVLITKNTKHKKLKTIFKEYKLPPWYRKKIPLIFYNNKFICALGLFVSNTHKKSNNEKNLKLSWISSIHNIIV.

19 to 24 (SGGIDS) contacts ATP.

The protein belongs to the tRNA(Ile)-lysidine synthase family.

The protein localises to the cytoplasm. It catalyses the reaction cytidine(34) in tRNA(Ile2) + L-lysine + ATP = lysidine(34) in tRNA(Ile2) + AMP + diphosphate + H(+). Ligates lysine onto the cytidine present at position 34 of the AUA codon-specific tRNA(Ile) that contains the anticodon CAU, in an ATP-dependent manner. Cytidine is converted to lysidine, thus changing the amino acid specificity of the tRNA from methionine to isoleucine. The protein is tRNA(Ile)-lysidine synthase of Buchnera aphidicola subsp. Baizongia pistaciae (strain Bp).